The sequence spans 154 residues: Spermatogenesis-associated protein 19, mitochondrial (154 aa).

The N-terminal 24 residues, 1–24 (MIITTWIMYILARKSIGLPFPPRV), are a transit peptide targeting the mitochondrion. Phosphoserine is present on residues serine 26 and serine 116.

As to expression, expressed in the testis.

Its subcellular location is the mitochondrion outer membrane. The protein localises to the mitochondrion. It localises to the cell projection. The protein resides in the cilium. It is found in the flagellum. In terms of biological role, essential for sperm motility and male fertility. Plays an important role in sperm motility by regulating the organization and function of the mitochondria and is also required for correct sperm midpiece assembly. The chain is Spermatogenesis-associated protein 19, mitochondrial (Spata19) from Rattus norvegicus (Rat).